The following is a 337-amino-acid chain: MIQKNWQELIKPNKVDFITHGSRTHATVVAEPLERGFGLTLGNALRRVLLSSLRGAAVTAVQIDGVLHEFSSIPGVREDVTDIVLNIKEIAIRMEGEGPKRMVVHKEGPGVVTAGDIQTVGDVEILNPEHVICTLDEGAEIRMEFTVNTGKGYVPADCNRAEDAPIGLIPVDSLYSPVRKVSYKIENTREGQVLDYDKLTLNIETNGSVTGEDAVAYAARILQDQLSIFVNFEEPQKEAPQEQVAELAFNPALLKKVDELELSVRSANCLKNDNIVYIGDLIQKTEAEMLRTPNFGRKSLNEIKEVLASMGLHLGMEIPAWPPENIEDLAKRYEDQY.

Residues 1 to 233 (MIQKNWQELI…DQLSIFVNFE (233 aa)) form an alpha N-terminal domain (alpha-NTD) region. An alpha C-terminal domain (alpha-CTD) region spans residues 249 to 337 (FNPALLKKVD…DLAKRYEDQY (89 aa)).

This sequence belongs to the RNA polymerase alpha chain family. In terms of assembly, homodimer. The RNAP catalytic core consists of 2 alpha, 1 beta, 1 beta' and 1 omega subunit. When a sigma factor is associated with the core the holoenzyme is formed, which can initiate transcription.

It catalyses the reaction RNA(n) + a ribonucleoside 5'-triphosphate = RNA(n+1) + diphosphate. DNA-dependent RNA polymerase catalyzes the transcription of DNA into RNA using the four ribonucleoside triphosphates as substrates. This Brucella melitensis biotype 2 (strain ATCC 23457) protein is DNA-directed RNA polymerase subunit alpha.